We begin with the raw amino-acid sequence, 362 residues long: DNA polymerase IV (362 aa).

The region spanning 6–187 is the UmuC domain; that stretch reads IIHVDMDAFY…LPVSSFHGVG (182 aa). Residues Asp10 and Asp105 each contribute to the Mg(2+) site. Glu106 is an active-site residue.

It belongs to the DNA polymerase type-Y family. In terms of assembly, monomer. The cofactor is Mg(2+).

It localises to the cytoplasm. The enzyme catalyses DNA(n) + a 2'-deoxyribonucleoside 5'-triphosphate = DNA(n+1) + diphosphate. Functionally, poorly processive, error-prone DNA polymerase involved in untargeted mutagenesis. Copies undamaged DNA at stalled replication forks, which arise in vivo from mismatched or misaligned primer ends. These misaligned primers can be extended by PolIV. Exhibits no 3'-5' exonuclease (proofreading) activity. May be involved in translesional synthesis, in conjunction with the beta clamp from PolIII. The polypeptide is DNA polymerase IV (Leptospira interrogans serogroup Icterohaemorrhagiae serovar Lai (strain 56601)).